A 262-amino-acid chain; its full sequence is Acyl-[acyl-carrier-protein]--UDP-N-acetylglucosamine O-acyltransferase (262 aa).

Belongs to the transferase hexapeptide repeat family. LpxA subfamily. In terms of assembly, homotrimer.

It is found in the cytoplasm. It carries out the reaction a (3R)-hydroxyacyl-[ACP] + UDP-N-acetyl-alpha-D-glucosamine = a UDP-3-O-[(3R)-3-hydroxyacyl]-N-acetyl-alpha-D-glucosamine + holo-[ACP]. It functions in the pathway glycolipid biosynthesis; lipid IV(A) biosynthesis; lipid IV(A) from (3R)-3-hydroxytetradecanoyl-[acyl-carrier-protein] and UDP-N-acetyl-alpha-D-glucosamine: step 1/6. Involved in the biosynthesis of lipid A, a phosphorylated glycolipid that anchors the lipopolysaccharide to the outer membrane of the cell. The sequence is that of Acyl-[acyl-carrier-protein]--UDP-N-acetylglucosamine O-acyltransferase from Cronobacter sakazakii (strain ATCC BAA-894) (Enterobacter sakazakii).